Reading from the N-terminus, the 415-residue chain is Serine/threonine transporter SstT (415 aa).

A run of 9 helical transmembrane segments spans residues 21–41 (ILLG…AALA), 45–65 (LGTL…LMLV), 83–103 (ILFL…VLSV), 142–162 (ALLN…GLAF), 193–213 (LGIF…ALWG), 217–237 (LLMV…PLIV), 299–319 (MAGA…TLGI), 331–351 (VVAS…LLLI), and 358–378 (FGIS…IGVL).

Belongs to the dicarboxylate/amino acid:cation symporter (DAACS) (TC 2.A.23) family.

The protein localises to the cell inner membrane. The enzyme catalyses L-serine(in) + Na(+)(in) = L-serine(out) + Na(+)(out). The catalysed reaction is L-threonine(in) + Na(+)(in) = L-threonine(out) + Na(+)(out). Its function is as follows. Involved in the import of serine and threonine into the cell, with the concomitant import of sodium (symport system). The protein is Serine/threonine transporter SstT of Pectobacterium carotovorum subsp. carotovorum (strain PC1).